An 847-amino-acid polypeptide reads, in one-letter code: DNA gyrase subunit A (847 aa).

Residues 34-533 (LPDVRDGLKP…NYSDINTSDL (500 aa)) enclose the Topo IIA-type catalytic domain. The O-(5'-phospho-DNA)-tyrosine intermediate role is filled by Tyr-122. The GyrA-box signature appears at 560-566 (QKRGGKG).

The protein belongs to the type II topoisomerase GyrA/ParC subunit family. In terms of assembly, heterotetramer, composed of two GyrA and two GyrB chains. In the heterotetramer, GyrA contains the active site tyrosine that forms a transient covalent intermediate with DNA, while GyrB binds cofactors and catalyzes ATP hydrolysis.

The protein localises to the cytoplasm. The catalysed reaction is ATP-dependent breakage, passage and rejoining of double-stranded DNA.. Its function is as follows. A type II topoisomerase that negatively supercoils closed circular double-stranded (ds) DNA in an ATP-dependent manner to modulate DNA topology and maintain chromosomes in an underwound state. Negative supercoiling favors strand separation, and DNA replication, transcription, recombination and repair, all of which involve strand separation. Also able to catalyze the interconversion of other topological isomers of dsDNA rings, including catenanes and knotted rings. Type II topoisomerases break and join 2 DNA strands simultaneously in an ATP-dependent manner. In Buchnera aphidicola subsp. Baizongia pistaciae (strain Bp), this protein is DNA gyrase subunit A.